The chain runs to 159 residues: MKIRIGHGFDVHKFGEARPLILCGVEVPYETGLVAHSDGDVVLHAISDAILGAMALGDIGKHFPDTDAAYKGADSRVLLRHCYALARAKGFELGNLDVTIIAQAPKMAPHIEDMRQVLAADLNADIADINVKATTTEKLGFTGRKEGIAVEAVVLLSRQ.

The a divalent metal cation site is built by Asp-10 and His-12. Residues 10–12 and 36–37 each bind 4-CDP-2-C-methyl-D-erythritol 2-phosphate; these read DVH and HS. Residue His-44 coordinates a divalent metal cation. 4-CDP-2-C-methyl-D-erythritol 2-phosphate contacts are provided by residues 58 to 60, 63 to 67, 102 to 108, 134 to 137, Phe-141, and Arg-144; these read DIG, FPDTD, AQAPKMA, and TTTE.

It belongs to the IspF family. In terms of assembly, homotrimer. The cofactor is a divalent metal cation.

The enzyme catalyses 4-CDP-2-C-methyl-D-erythritol 2-phosphate = 2-C-methyl-D-erythritol 2,4-cyclic diphosphate + CMP. Its pathway is isoprenoid biosynthesis; isopentenyl diphosphate biosynthesis via DXP pathway; isopentenyl diphosphate from 1-deoxy-D-xylulose 5-phosphate: step 4/6. Involved in the biosynthesis of isopentenyl diphosphate (IPP) and dimethylallyl diphosphate (DMAPP), two major building blocks of isoprenoid compounds. Catalyzes the conversion of 4-diphosphocytidyl-2-C-methyl-D-erythritol 2-phosphate (CDP-ME2P) to 2-C-methyl-D-erythritol 2,4-cyclodiphosphate (ME-CPP) with a corresponding release of cytidine 5-monophosphate (CMP). This Shewanella sp. (strain ANA-3) protein is 2-C-methyl-D-erythritol 2,4-cyclodiphosphate synthase.